The chain runs to 412 residues: Small ribosomal subunit protein mL103 (rPPR7) (412 aa).

The N-terminal 14 residues, 1–14 (MASSRISLRLVRRF), are a transit peptide targeting the mitochondrion. Residues 21-37 (GTTTAPSSGKISVSKAK) are compositionally biased toward polar residues. Positions 21 to 43 (GTTTAPSSGKISVSKAKSTLRKE) are disordered. PPR repeat units follow at residues 101–135 (EEPFYSTLIRSYGQASMFNHAMRTFEQMDQYGTPR), 136–166 (SAVSFNALLNACLHSKNFDKVPQLFDEIPQR), 173–207 (DKISYGILIKSYCDSGTPEKAIEIMRQMQGKGMEV), 208–242 (TTIAFTTILSSLYKKGELEVADNLWNEMVKKGCEL), 243–276 (DNAAYNVRIMSAQKESPERVKELIEEMSSMGLKP), 277–311 (DTISYNYLMTAYCERGMLDEAKKVYEGLEGNNCAP), 312–346 (NAATFRTLIFHLCYSRLYEQGYAIFKKSVYMHKIP), and 347–377 (DFNTLKHLVVGLVENKKRDDAKGLIRTVKKK).

It belongs to the PPR family. P subfamily. Component of the mitochondrial ribosome small subunit.

The protein localises to the mitochondrion. The polypeptide is Small ribosomal subunit protein mL103 (rPPR7) (Arabidopsis thaliana (Mouse-ear cress)).